Reading from the N-terminus, the 658-residue chain is Gametogenetin (658 aa).

Disordered regions lie at residues M1–G268 and K285–G584. Over residues S14–P30 the composition is skewed to basic and acidic residues. The segment covering P54–S83 has biased composition (low complexity). An interaction with GGNBP1 region spans residues R127 to P491. Positions P163–P188 are enriched in pro residues. Polar residues predominate over residues L194–S204. Residues S252 to G264 are compositionally biased toward low complexity. S384 bears the Phosphoserine mark. Low complexity predominate over residues P398–P409. A compositionally biased stretch (pro residues) spans R423–P460. Positions L489–A516 are enriched in low complexity. The tract at residues E496–T658 is interactions with ZNF403/GGNBP2 and OAZ3. Basic residues predominate over residues I527–R536.

Interacts with FANCL, GGNBP1 and ZNF403/GGNBP2.

May be involved in spermatogenesis. This is Gametogenetin (Ggn) from Rattus norvegicus (Rat).